Here is a 225-residue protein sequence, read N- to C-terminus: Cardiotrophin-like cytokine factor 1 (225 aa).

An N-terminal signal peptide occupies residues 1-27 (MDLRAGDSWGMLACLCTVLWHLPAVPA). An N-linked (GlcNAc...) asparagine glycan is attached at Asn29.

The protein belongs to the IL-6 superfamily. In terms of assembly, forms a heteromeric complex with cardiotrophin-like cytokine CRLF1/CLF-1; the CRLF1-CLCF1 complex is a ligand for the ciliary neurotrophic factor receptor/CNTFR. The CRLF1-CLCF1 heterodimer binds SORL1 (via N-terminal ectodomain); within this complex, the interaction is mediated predominantly by the CRLF1 moiety. The tripartite signaling complex formed by CRLF1, CLCF1 and CNTFR also binds SORL1.

The protein localises to the secreted. In terms of biological role, in complex with CRLF1, forms a heterodimeric neurotropic cytokine that plays a crucial role during neuronal development. Also stimulates B-cells. Binds to and activates the ILST/gp130 receptor. The sequence is that of Cardiotrophin-like cytokine factor 1 (Clcf1) from Mus musculus (Mouse).